Reading from the N-terminus, the 137-residue chain is Small heat shock protein IbpA (137 aa).

A sHSP domain is found at 28 to 137 (TQSNGGYPPY…AMKPRRIEIK (110 aa)).

The protein belongs to the small heat shock protein (HSP20) family. Monomer. Forms homomultimers of about 100-150 subunits at optimal growth temperatures. Conformation changes to monomers at high temperatures or high ionic concentrations.

It localises to the cytoplasm. Its function is as follows. Associates with aggregated proteins, together with IbpB, to stabilize and protect them from irreversible denaturation and extensive proteolysis during heat shock and oxidative stress. Aggregated proteins bound to the IbpAB complex are more efficiently refolded and reactivated by the ATP-dependent chaperone systems ClpB and DnaK/DnaJ/GrpE. Its activity is ATP-independent. This Pectobacterium atrosepticum (strain SCRI 1043 / ATCC BAA-672) (Erwinia carotovora subsp. atroseptica) protein is Small heat shock protein IbpA.